A 175-amino-acid chain; its full sequence is Ribosome maturation factor RimM (175 aa).

Positions 100–173 (EGEYYFHEII…TIIIRPMEGL (74 aa)) constitute a PRC barrel domain.

It belongs to the RimM family. In terms of assembly, binds ribosomal protein uS19.

It localises to the cytoplasm. An accessory protein needed during the final step in the assembly of 30S ribosomal subunit, possibly for assembly of the head region. Essential for efficient processing of 16S rRNA. May be needed both before and after RbfA during the maturation of 16S rRNA. It has affinity for free ribosomal 30S subunits but not for 70S ribosomes. This is Ribosome maturation factor RimM from Geobacillus kaustophilus (strain HTA426).